Here is a 367-residue protein sequence, read N- to C-terminus: 3-dehydroquinate synthase (367 aa).

NAD(+)-binding positions include 69–74 (DGEAFK), 103–107 (GVIGD), 127–128 (TT), lysine 140, and lysine 149. Zn(2+) is bound by residues glutamate 182, histidine 245, and histidine 262.

It belongs to the sugar phosphate cyclases superfamily. Dehydroquinate synthase family. The cofactor is NAD(+). Co(2+) serves as cofactor. Zn(2+) is required as a cofactor.

It is found in the cytoplasm. It carries out the reaction 7-phospho-2-dehydro-3-deoxy-D-arabino-heptonate = 3-dehydroquinate + phosphate. Its pathway is metabolic intermediate biosynthesis; chorismate biosynthesis; chorismate from D-erythrose 4-phosphate and phosphoenolpyruvate: step 2/7. Catalyzes the conversion of 3-deoxy-D-arabino-heptulosonate 7-phosphate (DAHP) to dehydroquinate (DHQ). This chain is 3-dehydroquinate synthase, found in Pseudomonas syringae pv. tomato (strain ATCC BAA-871 / DC3000).